Consider the following 409-residue polypeptide: SPI-1 type 3 secretion system translocon protein SctB (409 aa).

Residues 119 to 140 (ISGMSSSAVALLAAANTLMLTL) form a helical membrane-spanning segment. Over residues 350–368 (ERSEQQISQVNNRVASTAS) the composition is skewed to polar residues. Residues 350–378 (ERSEQQISQVNNRVASTASDEARESSRKS) form a disordered region.

This sequence belongs to the SctB/SipC family. As to quaternary structure, the core secretion machinery of the T3SS is composed of approximately 20 different proteins, including cytoplasmic components, a base, an export apparatus and a needle. This subunit is involved in the formation of a pore, called the translocon, in host membrane.

The protein localises to the secreted. It is found in the host membrane. In terms of biological role, component of the type III secretion system 1 (SPI-1 T3SS), also called injectisome, which is used to inject bacterial effector proteins into eukaryotic host cells. SipB/SctE1 and SipC/SctB1 are inserted into the host membrane where they form a pore and allow the translocation of effector proteins into the cytosol of target cells. This is SPI-1 type 3 secretion system translocon protein SctB from Salmonella typhi.